The primary structure comprises 500 residues: Histidine ammonia-lyase (500 aa).

The 5-imidazolinone (Ala-Gly) cross-link spans 141-143 (ASG). Position 142 is a 2,3-didehydroalanine (Ser) (serine 142).

This sequence belongs to the PAL/histidase family. In terms of processing, contains an active site 4-methylidene-imidazol-5-one (MIO), which is formed autocatalytically by cyclization and dehydration of residues Ala-Ser-Gly.

It localises to the cytoplasm. The enzyme catalyses L-histidine = trans-urocanate + NH4(+). Its pathway is amino-acid degradation; L-histidine degradation into L-glutamate; N-formimidoyl-L-glutamate from L-histidine: step 1/3. The polypeptide is Histidine ammonia-lyase (Shouchella clausii (strain KSM-K16) (Alkalihalobacillus clausii)).